Reading from the N-terminus, the 209-residue chain is Small ribosomal subunit protein uS4 (209 aa).

Residues 23-46 (SRNPLLKKPHPPGQHGMQRKKKSD) form a disordered region. The region spanning 93–156 (CRLDNMVYRM…RKLQSVQESL (64 aa)) is the S4 RNA-binding domain.

It belongs to the universal ribosomal protein uS4 family. As to quaternary structure, part of the 30S ribosomal subunit. Contacts protein S5. The interaction surface between S4 and S5 is involved in control of translational fidelity.

Functionally, one of the primary rRNA binding proteins, it binds directly to 16S rRNA where it nucleates assembly of the body of the 30S subunit. With S5 and S12 plays an important role in translational accuracy. This Chlamydia felis (strain Fe/C-56) (Chlamydophila felis) protein is Small ribosomal subunit protein uS4.